A 98-amino-acid polypeptide reads, in one-letter code: Small ribosomal subunit protein uS19 (98 aa).

2 disordered regions span residues 1–30 (MARSIKKGPFADKHLTKKVEDANKGNKKSV) and 78–98 (RTFHGHSAEKKAAAAPGPAKK). A compositionally biased stretch (basic and acidic residues) spans 9–24 (PFADKHLTKKVEDANK).

Belongs to the universal ribosomal protein uS19 family.

Protein S19 forms a complex with S13 that binds strongly to the 16S ribosomal RNA. This Anaeromyxobacter dehalogenans (strain 2CP-C) protein is Small ribosomal subunit protein uS19.